Here is a 269-residue protein sequence, read N- to C-terminus: Hydroxyethylthiazole kinase (269 aa).

Methionine 46 contributes to the substrate binding site. ATP-binding residues include arginine 122 and threonine 168. Glycine 195 provides a ligand contact to substrate.

The protein belongs to the Thz kinase family. Mg(2+) is required as a cofactor.

The enzyme catalyses 5-(2-hydroxyethyl)-4-methylthiazole + ATP = 4-methyl-5-(2-phosphooxyethyl)-thiazole + ADP + H(+). The protein operates within cofactor biosynthesis; thiamine diphosphate biosynthesis; 4-methyl-5-(2-phosphoethyl)-thiazole from 5-(2-hydroxyethyl)-4-methylthiazole: step 1/1. Its function is as follows. Catalyzes the phosphorylation of the hydroxyl group of 4-methyl-5-beta-hydroxyethylthiazole (THZ). In Geobacillus kaustophilus (strain HTA426), this protein is Hydroxyethylthiazole kinase.